A 1004-amino-acid chain; its full sequence is Importin subunit beta-5 (1004 aa).

An N-acetylmethionine modification is found at M1. In terms of domain architecture, Importin N-terminal spans 21 to 100; it reads AETQLLQWCD…REVLLKLCLN (80 aa).

This sequence belongs to the importin beta family. As to quaternary structure, interacts with NAP1.

The protein resides in the cytoplasm. The protein localises to the nucleus. It is found in the nuclear pore complex. Required for nuclear protein import and mediates docking of import substrate to distinct nucleoporins. Serves a receptor for nuclear localization signals. Mediates the nuclear import of TATA-binding protein (TBP) and of histones H2A and H2B. This chain is Importin subunit beta-5 (KAP114), found in Saccharomyces cerevisiae (strain ATCC 204508 / S288c) (Baker's yeast).